Here is a 1013-residue protein sequence, read N- to C-terminus: Ephrin type-A receptor 5 (1013 aa).

The N-terminal stretch at Met-1–Ala-31 is a signal peptide. The Extracellular portion of the chain corresponds to Ser-32–Pro-549. The Eph LBD domain occupies Glu-36–Arg-214. 6 N-linked (GlcNAc...) asparagine glycosylation sites follow: Asn-240, Asn-275, Asn-345, Asn-399, Asn-412, and Asn-437. Fibronectin type-III domains lie at Pro-333–Ala-443 and Ala-444–Val-538. A helical transmembrane segment spans residues Ile-550 to Leu-570. Residues Ser-571–Leu-1013 lie on the Cytoplasmic side of the membrane. A phosphotyrosine; by autocatalysis mark is found at Tyr-626 and Tyr-632. The Protein kinase domain occupies Ile-651 to Ile-912. Residues Ile-657–Val-665 and Lys-683 each bind ATP. Catalysis depends on Asp-776, which acts as the Proton acceptor. 2 positions are modified to phosphotyrosine; by autocatalysis: Tyr-809 and Tyr-958. The 73-residue stretch at Gly-941–Leu-1013 folds into the SAM domain. The PDZ-binding motif lies at Val-1011 to Leu-1013.

The protein belongs to the protein kinase superfamily. Tyr protein kinase family. Ephrin receptor subfamily. In terms of assembly, heterotetramer upon binding of the ligand. The heterotetramer is composed of an ephrin dimer and a receptor dimer. Oligomerization is probably required to induce biological responses. Post-translationally, phosphorylated. Phosphorylation is stimulated by the ligand EFNA5. In terms of tissue distribution, detected in the 10-day embryonic brain, weaker expression in the rest of the 10-day embryo. Undetected in adult tissues.

Its subcellular location is the cell membrane. The protein resides in the cell projection. The protein localises to the axon. It localises to the dendrite. It catalyses the reaction L-tyrosyl-[protein] + ATP = O-phospho-L-tyrosyl-[protein] + ADP + H(+). Its function is as follows. Receptor tyrosine kinase which binds promiscuously GPI-anchored ephrin-A family ligands residing on adjacent cells, leading to contact-dependent bidirectional signaling into neighboring cells. The signaling pathway downstream of the receptor is referred to as forward signaling while the signaling pathway downstream of the ephrin ligand is referred to as reverse signaling. Among GPI-anchored ephrin-A ligands, EFNA5 most probably constitutes the cognate/functional ligand for EPHA5. Functions as an axon guidance molecule during development and may be involved in the development of the retinotectal, entorhino-hippocampal and hippocamposeptal pathways. Together with EFNA5 plays also a role in synaptic plasticity in adult brain through regulation of synaptogenesis. This chain is Ephrin type-A receptor 5 (EPHA5), found in Gallus gallus (Chicken).